We begin with the raw amino-acid sequence, 376 residues long: UDP-N-acetylglucosamine 2-epimerase (376 aa).

Substrate contacts are provided by residues R10, K15, D95, E117, H213, Q271, F276, 290-292 (SGG), E296, and R313.

It belongs to the UDP-N-acetylglucosamine 2-epimerase family. As to quaternary structure, homodimer.

Its subcellular location is the cytoplasm. It carries out the reaction UDP-N-acetyl-alpha-D-glucosamine = UDP-N-acetyl-alpha-D-mannosamine. The protein operates within bacterial outer membrane biogenesis; enterobacterial common antigen biosynthesis. Its function is as follows. Catalyzes the reversible epimerization at C-2 of UDP-N-acetylglucosamine (UDP-GlcNAc) and thereby provides bacteria with UDP-N-acetylmannosamine (UDP-ManNAc), the activated donor of ManNAc residues. The polypeptide is UDP-N-acetylglucosamine 2-epimerase (Escherichia coli O157:H7).